The sequence spans 380 residues: MSSFLSKRFISTTQRAMSQLPKAKSLIYSSHDQDVSKILKVHTYQPKGSAESSILLKTLAFPINPSDINQLEGVYPSKPEKVLDYSTEKPSAIAGNKGLFEVVSLPSGVKNLKAGDRVIPLQANFGTWSTYRTCESENDLIKIEGVDLYTAATIAVNGCTAYQMVNDYIEWDPSGNDWLVQNAGTSSVSKIVTQIAKDKGIKTLSVVRDRDNFDEVAENLEKKYGATKVISESQNGEREFGNEVLPKILGPNAQVKLALNSVGGKSCTNIARKLSPNGLMLTYGGMSKQPVTLPTGLFIFNSIRSHGFWVTANSKRDPENKRKTVDAVVKLYRDGKIISPKEDIRTLEWDVNNLSDEGVLDLVNRGIATKGAKNMVVLKW.

Residues 1-17 (MSSFLSKRFISTTQRAM) constitute a mitochondrion transit peptide.

This sequence belongs to the zinc-containing alcohol dehydrogenase family. Quinone oxidoreductase subfamily. As to quaternary structure, homodimer.

The protein localises to the mitochondrion. The enzyme catalyses a quinone + NADH + H(+) = a quinol + NAD(+). It catalyses the reaction a quinone + NADPH + H(+) = a quinol + NADP(+). Functionally, NADPH quinone oxidoreductase that efficiently reduces 1,4-benzoquinone, whereas no activities are found for menadiones and methoxyquinones. This chain is NADPH quinone oxidoreductase, found in Kluyveromyces marxianus (Yeast).